A 95-amino-acid chain; its full sequence is Large ribosomal subunit protein bL25 (95 aa).

This sequence belongs to the bacterial ribosomal protein bL25 family. In terms of assembly, part of the 50S ribosomal subunit; part of the 5S rRNA/L5/L18/L25 subcomplex. Contacts the 5S rRNA. Binds to the 5S rRNA independently of L5 and L18.

This is one of the proteins that binds to the 5S RNA in the ribosome where it forms part of the central protuberance. The polypeptide is Large ribosomal subunit protein bL25 (Actinobacillus succinogenes (strain ATCC 55618 / DSM 22257 / CCUG 43843 / 130Z)).